The following is a 266-amino-acid chain: Thymidylate synthase (266 aa).

Residue Arg24 participates in dUMP binding. Residue His54 participates in (6R)-5,10-methylene-5,6,7,8-tetrahydrofolate binding. DUMP is bound at residue 129 to 130; that stretch reads RR. The active-site Nucleophile is the Cys149. DUMP is bound by residues 169–172, Asn180, and 210–212; these read RSAD and HIY. Asp172 contacts (6R)-5,10-methylene-5,6,7,8-tetrahydrofolate. Ala265 provides a ligand contact to (6R)-5,10-methylene-5,6,7,8-tetrahydrofolate.

This sequence belongs to the thymidylate synthase family. Bacterial-type ThyA subfamily. Homodimer.

The protein localises to the cytoplasm. The enzyme catalyses dUMP + (6R)-5,10-methylene-5,6,7,8-tetrahydrofolate = 7,8-dihydrofolate + dTMP. It functions in the pathway pyrimidine metabolism; dTTP biosynthesis. Catalyzes the reductive methylation of 2'-deoxyuridine-5'-monophosphate (dUMP) to 2'-deoxythymidine-5'-monophosphate (dTMP) while utilizing 5,10-methylenetetrahydrofolate (mTHF) as the methyl donor and reductant in the reaction, yielding dihydrofolate (DHF) as a by-product. This enzymatic reaction provides an intracellular de novo source of dTMP, an essential precursor for DNA biosynthesis. The protein is Thymidylate synthase of Mycobacterium ulcerans (strain Agy99).